Consider the following 493-residue polypeptide: Probable cytosol aminopeptidase (493 aa).

Mn(2+) is bound by residues lysine 256 and aspartate 261. Lysine 268 is an active-site residue. Mn(2+)-binding residues include aspartate 279, aspartate 338, and glutamate 340. Residue arginine 342 is part of the active site.

Belongs to the peptidase M17 family. It depends on Mn(2+) as a cofactor.

It is found in the cytoplasm. It carries out the reaction Release of an N-terminal amino acid, Xaa-|-Yaa-, in which Xaa is preferably Leu, but may be other amino acids including Pro although not Arg or Lys, and Yaa may be Pro. Amino acid amides and methyl esters are also readily hydrolyzed, but rates on arylamides are exceedingly low.. The enzyme catalyses Release of an N-terminal amino acid, preferentially leucine, but not glutamic or aspartic acids.. Presumably involved in the processing and regular turnover of intracellular proteins. Catalyzes the removal of unsubstituted N-terminal amino acids from various peptides. The chain is Probable cytosol aminopeptidase from Phytoplasma australiense.